Consider the following 210-residue polypeptide: Imidazole glycerol phosphate synthase subunit HisH (210 aa).

The Glutamine amidotransferase type-1 domain occupies 3 to 210; that stretch reads KVALLDYGSG…QLLRNWIDLL (208 aa). Residue cysteine 81 is the Nucleophile of the active site. Residues histidine 191 and glutamate 193 contribute to the active site.

In terms of assembly, heterodimer of HisH and HisF.

The protein resides in the cytoplasm. It catalyses the reaction 5-[(5-phospho-1-deoxy-D-ribulos-1-ylimino)methylamino]-1-(5-phospho-beta-D-ribosyl)imidazole-4-carboxamide + L-glutamine = D-erythro-1-(imidazol-4-yl)glycerol 3-phosphate + 5-amino-1-(5-phospho-beta-D-ribosyl)imidazole-4-carboxamide + L-glutamate + H(+). The enzyme catalyses L-glutamine + H2O = L-glutamate + NH4(+). Its pathway is amino-acid biosynthesis; L-histidine biosynthesis; L-histidine from 5-phospho-alpha-D-ribose 1-diphosphate: step 5/9. Its function is as follows. IGPS catalyzes the conversion of PRFAR and glutamine to IGP, AICAR and glutamate. The HisH subunit catalyzes the hydrolysis of glutamine to glutamate and ammonia as part of the synthesis of IGP and AICAR. The resulting ammonia molecule is channeled to the active site of HisF. This Corynebacterium diphtheriae (strain ATCC 700971 / NCTC 13129 / Biotype gravis) protein is Imidazole glycerol phosphate synthase subunit HisH.